Consider the following 231-residue polypeptide: Sugar fermentation stimulation protein homolog (231 aa).

This sequence belongs to the SfsA family.

The sequence is that of Sugar fermentation stimulation protein homolog from Pyrobaculum islandicum (strain DSM 4184 / JCM 9189 / GEO3).